The sequence spans 82 residues: Putative antitoxin VapB23 (82 aa).

Functionally, putative antitoxin component of a possible type II toxin-antitoxin (TA) system. The cognate toxin is VapC23. The chain is Putative antitoxin VapB23 (vapB23) from Mycobacterium tuberculosis (strain ATCC 25618 / H37Rv).